The primary structure comprises 601 residues: Probable cytochrome P450 525A1 (601 aa).

A helical membrane pass occupies residues 12–32 (ISYFLTCSIFGFILWILTEQI). The segment at 205 to 253 (NNNNNNNNNNNNNNNNNNNNNNNNNNNNNNNNNNNNNNNNNNNNNNNNN) is disordered. Cysteine 544 is a heme binding site.

This sequence belongs to the cytochrome P450 family. It depends on heme as a cofactor.

It localises to the membrane. The sequence is that of Probable cytochrome P450 525A1 (cyp525A1) from Dictyostelium discoideum (Social amoeba).